We begin with the raw amino-acid sequence, 244 residues long: rRNA adenine N-6-methyltransferase (244 aa).

S-adenosyl-L-methionine contacts are provided by asparagine 11, isoleucine 13, glycine 38, glutamate 59, aspartate 84, and asparagine 101.

This sequence belongs to the class I-like SAM-binding methyltransferase superfamily. rRNA adenine N(6)-methyltransferase family.

It carries out the reaction adenosine(2085) in 23S rRNA + 2 S-adenosyl-L-methionine = N(6)-dimethyladenosine(2085) in 23S rRNA + 2 S-adenosyl-L-homocysteine + 2 H(+). In terms of biological role, this protein produces a dimethylation of the adenine residue at position 2085 in 23S rRNA, resulting in reduced affinity between ribosomes and macrolide-lincosamide-streptogramin B antibiotics. In Staphylococcus epidermidis, this protein is rRNA adenine N-6-methyltransferase (ermM).